A 236-amino-acid chain; its full sequence is OPEP-2 protein (236 aa).

In Orgyia pseudotsugata (Douglas-fir tussock moth), this protein is OPEP-2 protein (OPEP-2).